An 812-amino-acid chain; its full sequence is Lon protease (812 aa).

Positions 22 to 215 (YAVLPLRDIV…KALSFMEAEI (194 aa)) constitute a Lon N-terminal domain. ATP is bound at residue 367 to 374 (GPPGVGKT). Positions 602–783 (EDQVGVVTGL…GEVLKHTLVR (182 aa)) constitute a Lon proteolytic domain. Active-site residues include serine 689 and lysine 732. Residues 787 to 812 (PIEWTEQENPTAVPPVEDEAGASLAH) are disordered.

This sequence belongs to the peptidase S16 family. As to quaternary structure, homohexamer. Organized in a ring with a central cavity.

The protein localises to the cytoplasm. It catalyses the reaction Hydrolysis of proteins in presence of ATP.. ATP-dependent serine protease that mediates the selective degradation of mutant and abnormal proteins as well as certain short-lived regulatory proteins. Required for cellular homeostasis and for survival from DNA damage and developmental changes induced by stress. Degrades polypeptides processively to yield small peptide fragments that are 5 to 10 amino acids long. Binds to DNA in a double-stranded, site-specific manner. This chain is Lon protease, found in Brucella suis biovar 1 (strain 1330).